The following is a 250-amino-acid chain: MSVLVGLHGEAGSGKDTVAKLIIDWCNDTYPTCLSRRYSFAKPVYELASVILGVTPEFLGERRGKEIDQWFTVTQSQLERARDVWFKYGIDKFEDFSYVWPIFEEKYLNPQQLISENKEDGLYSLFISPRKMLQLVGTELGRQLVHERIWLIILEQSIAKDDPDVAVITDVRFPNEGELLRETNHLDMDSLLVNVVPAEQKFTIKSDHPSESGIPAKYITHELVNKFDGINNLKLEVYNFCDLELEPLVG.

The ATP site is built by G14, D16, and T17. The dGMP site is built by V44, K65, R130, G137, T138, W150, D170, R172, E176, and S210.

The protein belongs to the dNMP kinase family. Monomer.

It catalyses the reaction a 2'-deoxyribonucleoside 5'-phosphate + ATP = a 2'-deoxyribonucleoside 5'-diphosphate + ADP. Its function is as follows. Allows the synthesis of deoxyribonucleoside triphosphates necessary for the rapid viral DNA replication. Phosphorylates all four dNMPs. The enzyme had the highest activity with dAMP and had about 30% less activity with dTMP and dGMP, respectively. The lowest activity was observed with dCMP as the substrate (about 35% of that with dAMP). This Escherichia coli (Enterobacteria phage T5) protein is Deoxynucleoside-5'-monophosphate kinase.